We begin with the raw amino-acid sequence, 604 residues long: Netrin-1 (604 aa).

The first 24 residues, 1-24 (MMRAVWEALAALAAVACLVGAVRG), serve as a signal peptide directing secretion. The Laminin N-terminal domain maps to 47–284 (HPRRCIPDFV…AVSDLQVGGR (238 aa)). N-linked (GlcNAc...) asparagine glycans are attached at residues Asn95, Asn116, and Asn131. Intrachain disulfides connect Cys119–Cys152, Cys285–Cys294, Cys287–Cys304, Cys306–Cys315, Cys318–Cys338, Cys341–Cys350, Cys343–Cys368, Cys371–Cys380, Cys383–Cys401, Cys404–Cys416, Cys406–Cys423, Cys425–Cys434, Cys437–Cys451, Cys472–Xaa544, and Cys491–Cys601. Laminin EGF-like domains follow at residues 285-340 (CKCN…ECVA), 341-403 (CNCN…ACKA), and 404-453 (CDCH…PCIK). An N-linked (GlcNAc...) asparagine glycan is attached at Asn417. Residues 472-601 (CDSYCKASKG…FQQREKKGKC (130 aa)) form the NTR domain. Positions 530-532 (RGD) match the Cell attachment site motif.

As to quaternary structure, binds to its receptors; DCC, UNC5A, UNC5B, UNC5C and probably UNC5D. Binds to its receptor; DSCAM. Interacts with APP.

The protein resides in the secreted. Its subcellular location is the cytoplasm. Its function is as follows. Netrins control guidance of CNS commissural axons and peripheral motor axons. Its association with either DCC or some UNC5 receptors will lead to axon attraction or repulsion, respectively. Binding to UNC5C might cause dissociation of UNC5C from polymerized TUBB3 in microtubules and thereby lead to increased microtubule dynamics and axon repulsion. Involved in dorsal root ganglion axon projection towards the spinal cord. It also serves as a survival factor via its association with its receptors which prevent the initiation of apoptosis. Involved in colorectal tumorigenesis by regulating apoptosis. In Rattus norvegicus (Rat), this protein is Netrin-1 (Ntn1).